The chain runs to 507 residues: Probable aldehyde dehydrogenase (507 aa).

Residue 219 to 225 (GFGAEAG) coordinates NAD(+). Active-site residues include Glu-263 and Cys-302.

The protein belongs to the aldehyde dehydrogenase family.

It carries out the reaction an aldehyde + NAD(+) + H2O = a carboxylate + NADH + 2 H(+). This Mycobacterium bovis (strain ATCC BAA-935 / AF2122/97) protein is Probable aldehyde dehydrogenase.